Consider the following 23-residue polypeptide: Paralytic peptide 1 (23 aa).

An intrachain disulfide couples Cys-7 to Cys-19.

It belongs to the GBP/PSP1/paralytic peptide family. Hemolymph.

Functionally, causes rapid, rigid paralysis when injected into Lepidopteran larvae. The physiological role may be to reduce hemolymph loss following injury and promote wound healing. The sequence is that of Paralytic peptide 1 from Spodoptera exigua (Beet armyworm).